Consider the following 74-residue polypeptide: Conotoxin Vt11.7 (74 aa).

The signal sequence occupies residues 1–26 (MMFRLTSVGCFLLVIVLLNVAVLTNA). 4 disulfides stabilise this stretch: Cys-28/Cys-42, Cys-35/Cys-47, Cys-41/Cys-51, and Cys-46/Cys-55. Residues 62–74 (AHGHGLLRFWGQR) constitute a propeptide that is removed on maturation.

Belongs to the conotoxin I2 superfamily. Expressed by the venom duct.

Its subcellular location is the secreted. This Conus planorbis (Planorbis cone) protein is Conotoxin Vt11.7.